The following is a 190-amino-acid chain: Ribosome hibernation promotion factor (190 aa).

Residues 101–190 form a required for ribosome-binding region; sequence RDRGDQEVFV…KYGLIQTSEQ (90 aa).

Belongs to the HPF/YfiA ribosome-associated protein family. Long HPF subfamily. Interacts with 100S ribosomes during exponential growth, as 100S ribosomes decrease (after 28 hours) also found associated with 30s and 50S subunits.

The protein resides in the cytoplasm. Its function is as follows. Required and sufficient for dimerization of active 70S ribosomes into 100S ribosomes. 110S ribosomes are probably translationally inactive and may serve as a reservoir of easily reactivated ribosomes when necessary in the cell. Also reduces the translation efficiency of a small number of genes. Unlike E.coli, 100S ribosomes are present during exponential growth and decrease during stationary phase. This strain produces 30% fewer 100S ribosomes than strain N315 and RN4200 under the same growth conditions. This is Ribosome hibernation promotion factor from Staphylococcus aureus (strain USA300).